The chain runs to 436 residues: Antilisterial bacteriocin subtilosin biosynthesis protein AlbD (436 aa).

10 consecutive transmembrane segments (helical) span residues 27–47 (IAAGLVILAVFEIGLIRQAGI), 51–71 (VLGKTYIILALLLMNTYMVFL), 112–132 (TLFFFILPLFLFGNGTLSGAQ), 134–154 (LFWLGRFSFFTVYSILFGVML), 166–186 (FLLHAAVFAFVCLSAAFMPAV), 187–207 (TIPLCAVHMLWAVIIDFPVFL), 240–260 (AMLLNYVVMAAFSGFFSFQMM), 270–290 (IYIVISALLLICSPIALLYSI), 315–335 (FYSGLLAGGFLLVAIIVGFIS), and 395–415 (ATLAGTAVSLAVIPIAALIIV).

It localises to the cell membrane. Its function is as follows. Involved in the production of the bacteriocin subtilosin. Required for immunity to subtilosin. This is Antilisterial bacteriocin subtilosin biosynthesis protein AlbD (albD) from Bacillus subtilis.